Consider the following 406-residue polypeptide: Peptide transporter imqD (406 aa).

The disordered stretch occupies residues 1-25 (MTAPADSTEKSETSETTTLQTTEVS). Positions 14–25 (SETTTLQTTEVS) are enriched in low complexity. The next 6 helical transmembrane spans lie at 184–204 (GLVACRVILGFILFFTCLSQA), 220–240 (IPNDTITAMNPIFCVIMGPVI), 262–282 (ATGFIMMSASMAFAAGVQKII), 309–329 (VFLQTPTYIILAVAEIFSFVT), 344–364 (AVVQALGQLGAAAGSAIGIAI), and 373–393 (LIWMYTGLAVAMFLVAVVFWI).

Belongs to the major facilitator superfamily. Proton-dependent oligopeptide transporter (POT/PTR) (TC 2.A.17) family.

The protein resides in the membrane. Its function is as follows. Peptide transporter; part of the gene cluster that mediates the biosynthesis of imizoquins A to D, tripeptide-derived alkaloids that serve a protective role against oxidative stress that are essential for normal germination. In Aspergillus flavus (strain ATCC 200026 / FGSC A1120 / IAM 13836 / NRRL 3357 / JCM 12722 / SRRC 167), this protein is Peptide transporter imqD.